We begin with the raw amino-acid sequence, 306 residues long: Ornithine carbamoyltransferase (306 aa).

Carbamoyl phosphate-binding positions include 51-54 (STRT), Gln78, Arg102, and 129-132 (HPCQ). L-ornithine contacts are provided by residues Asn160, Asp223, and 227 to 228 (SM). Residues 263 to 264 (CL) and Arg291 each bind carbamoyl phosphate.

This sequence belongs to the aspartate/ornithine carbamoyltransferase superfamily. OTCase family.

It is found in the cytoplasm. It catalyses the reaction carbamoyl phosphate + L-ornithine = L-citrulline + phosphate + H(+). It participates in amino-acid biosynthesis; L-arginine biosynthesis; L-arginine from L-ornithine and carbamoyl phosphate: step 1/3. Reversibly catalyzes the transfer of the carbamoyl group from carbamoyl phosphate (CP) to the N(epsilon) atom of ornithine (ORN) to produce L-citrulline. The polypeptide is Ornithine carbamoyltransferase (Nostoc sp. (strain PCC 7120 / SAG 25.82 / UTEX 2576)).